A 407-amino-acid polypeptide reads, in one-letter code: MQTLSTPSTTATEFDTVIHRRPTRSVRVGDIWIGSRHPVVVQSMINEDTLDIDGSVAAIRRLHEIGCEIVRVTVPSLGHAKAVGDIKKKLQDTYRDVPLVADVHHNGMKIALEVAKHVDKVRINPGLYVFEKPDPNRQGYTPEEFERIGKQIRDTLEPLVTSLREQDKAMRIGVNHGSLAERMLFTYGDTPEGMVESALEFLRLCEEMDFRNLVISMKASRAPVMMAAYRLMAKRMDDLGMDYPLHLGVTEAGDGDYGRIKSTVGIGTLLAEGIGDTIRVSLTEAPENEIPVCYSILQALGLRKTMVEYVACPSCGRTLFNLEEVLHKVRAATNHLVGLDIAVMGCIVNGPGEMADADYGYVGKTPGTIALYRGRDEIKRVPEEQGVEELINLIKADGRWVEPEPIA.

4 residues coordinate [4Fe-4S] cluster: cysteine 312, cysteine 315, cysteine 346, and glutamate 353.

Belongs to the IspG family. [4Fe-4S] cluster is required as a cofactor.

The catalysed reaction is (2E)-4-hydroxy-3-methylbut-2-enyl diphosphate + 2 oxidized [2Fe-2S]-[ferredoxin] + H2O = 2-C-methyl-D-erythritol 2,4-cyclic diphosphate + 2 reduced [2Fe-2S]-[ferredoxin] + H(+). The protein operates within isoprenoid biosynthesis; isopentenyl diphosphate biosynthesis via DXP pathway; isopentenyl diphosphate from 1-deoxy-D-xylulose 5-phosphate: step 5/6. Functionally, converts 2C-methyl-D-erythritol 2,4-cyclodiphosphate (ME-2,4cPP) into 1-hydroxy-2-methyl-2-(E)-butenyl 4-diphosphate. The chain is 4-hydroxy-3-methylbut-2-en-1-yl diphosphate synthase (ferredoxin) from Synechococcus elongatus (strain ATCC 33912 / PCC 7942 / FACHB-805) (Anacystis nidulans R2).